Consider the following 77-residue polypeptide: Translation initiation factor IF-1, chloroplastic (77 aa).

One can recognise an S1-like domain in the interval 1 to 71; it reads MKEQKLIHEG…TRGRIIYRLR (71 aa).

It belongs to the IF-1 family. As to quaternary structure, component of the 30S ribosomal translation pre-initiation complex which assembles on the 30S ribosome in the order IF-2 and IF-3, IF-1 and N-formylmethionyl-tRNA(fMet); mRNA recruitment can occur at any time during PIC assembly.

It is found in the plastid. It localises to the chloroplast. Its function is as follows. One of the essential components for the initiation of protein synthesis. Stabilizes the binding of IF-2 and IF-3 on the 30S subunit to which N-formylmethionyl-tRNA(fMet) subsequently binds. Helps modulate mRNA selection, yielding the 30S pre-initiation complex (PIC). Upon addition of the 50S ribosomal subunit IF-1, IF-2 and IF-3 are released leaving the mature 70S translation initiation complex. In Liriodendron tulipifera (Tuliptree), this protein is Translation initiation factor IF-1, chloroplastic.